A 40-amino-acid polypeptide reads, in one-letter code: Dermonecrotic toxin LgSicTox-alphaI-1 (40 aa).

Mg(2+) contacts are provided by glutamate 32 and aspartate 34.

Belongs to the arthropod phospholipase D family. Class II subfamily. Mg(2+) serves as cofactor. Post-translationally, contains 2 disulfide bonds. In terms of tissue distribution, expressed by the venom gland.

Its subcellular location is the secreted. It catalyses the reaction an N-(acyl)-sphingosylphosphocholine = an N-(acyl)-sphingosyl-1,3-cyclic phosphate + choline. The catalysed reaction is an N-(acyl)-sphingosylphosphoethanolamine = an N-(acyl)-sphingosyl-1,3-cyclic phosphate + ethanolamine. It carries out the reaction a 1-acyl-sn-glycero-3-phosphocholine = a 1-acyl-sn-glycero-2,3-cyclic phosphate + choline. The enzyme catalyses a 1-acyl-sn-glycero-3-phosphoethanolamine = a 1-acyl-sn-glycero-2,3-cyclic phosphate + ethanolamine. In terms of biological role, dermonecrotic toxins cleave the phosphodiester linkage between the phosphate and headgroup of certain phospholipids (sphingolipid and lysolipid substrates), forming an alcohol (often choline) and a cyclic phosphate. This toxin acts on sphingomyelin (SM). It may also act on ceramide phosphoethanolamine (CPE), lysophosphatidylcholine (LPC) and lysophosphatidylethanolamine (LPE), but not on lysophosphatidylserine (LPS), and lysophosphatidylglycerol (LPG). It acts by transphosphatidylation, releasing exclusively cyclic phosphate products as second products. In vivo, intradermal injection induces dermonecrosis. Induces, hemolysis, vascular permeability, edema, inflammatory response, and platelet aggregation. The polypeptide is Dermonecrotic toxin LgSicTox-alphaI-1 (Loxosceles gaucho (Spider)).